Here is an 80-residue protein sequence, read N- to C-terminus: Venom protein HGE029 (80 aa).

Positions 1–22 (MNAKAFLAIFMIALLITDRAEA) are cleaved as a signal peptide.

It belongs to the non-disulfide-bridged peptide (NDBP) superfamily. Long chain multifunctional peptide (group 2) family. As to expression, expressed by the venom gland.

Its subcellular location is the secreted. The sequence is that of Venom protein HGE029 from Hoffmannihadrurus gertschi (Scorpion).